The following is a 234-amino-acid chain: Thymidine kinase, cytosolic (234 aa).

Residue Ser2 is modified to N-acetylserine. Residues Ser2 and Ser13 each carry the phosphoserine modification. ATP-binding positions include 26–33 (GPMFSGKS), 58–60 (DTR), and 97–100 (DEGQ). Glu98 acts as the Proton acceptor in catalysis. Residue Phe128 coordinates substrate. 2 residues coordinate Zn(2+): Cys153 and Cys156. Residues 172–176 (VEVIG) and Tyr181 each bind substrate. Cys185 and Cys188 together coordinate Zn(2+). The KEN box signature appears at 203-205 (KEN). Ser231 carries the phosphoserine modification.

It belongs to the thymidine kinase family. Homotetramer. Tetramerization from dimerization is induced by ATP and increases catalytic efficiency due to a high affinity for thymidine. Tetramerization is inhibited by phosphorylation at Ser-13. Interacts (via the KEN box) with FZR1. Post-translationally, phosphorylated on Ser-13 in mitosis. Phosphorylation of Ser-13 by CDK1 during mitosis reduces homotetramerization and catalytic efficiency when DNA replication is complete and intracellular TK1 is still present at a high level. In terms of processing, polyubiquitinated. Postmitosis, ubiquitination leads to proteasomal degradation. The KEN box sequence located at the C-terminal region targets for degradation by the anaphase promoting complex (APC/C) activated and rate-limited by FZR1.

The protein localises to the cytoplasm. The catalysed reaction is thymidine + ATP = dTMP + ADP + H(+). Its function is as follows. Cell-cycle-regulated enzyme of importance in nucleotide metabolism. Catalyzes the first enzymatic step in the salvage pathway converting thymidine into thymidine monophosphate. Transcriptional regulation limits expression to the S phase of the cell cycle and transient expression coincides with the oscillation in the intracellular dTTP concentration. Also important for the activation of anticancer and antiviral nucleoside analog prodrugs such as 1-b-d-arabinofuranosylcytosine (AraC) and 3c-azido-3c-deoxythymidine (AZT). The sequence is that of Thymidine kinase, cytosolic from Homo sapiens (Human).